A 372-amino-acid chain; its full sequence is Enoyl-[acyl-carrier-protein] reductase, mitochondrial (372 aa).

The transit peptide at 1 to 18 (MSFFKTAVRRFSSTSITR) directs the protein to the mitochondrion. Tyr72 (proton donor) is an active-site residue. Residues Asn157, 183–186 (NSMV), 206–208 (RNR), 279–282 (FGGM), 304–306 (FWV), and Lys365 contribute to the NADP(+) site.

This sequence belongs to the zinc-containing alcohol dehydrogenase family. Quinone oxidoreductase subfamily. As to quaternary structure, homodimer.

It is found in the mitochondrion matrix. The enzyme catalyses a 2,3-saturated acyl-[ACP] + NADP(+) = a (2E)-enoyl-[ACP] + NADPH + H(+). Functionally, catalyzes the NADPH-dependent reduction of trans-2-enoyl thioesters in mitochondrial fatty acid synthesis (fatty acid synthesis type II). Fatty acid chain elongation in mitochondria uses acyl carrier protein (ACP) as an acyl group carrier, but the enzyme accepts both ACP and CoA thioesters as substrates in vitro. Required for respiration and the maintenance of the mitochondrial compartment. The chain is Enoyl-[acyl-carrier-protein] reductase, mitochondrial (etr1) from Schizosaccharomyces pombe (strain 972 / ATCC 24843) (Fission yeast).